The primary structure comprises 244 residues: Putative lipoprotein LprA (244 aa).

Positions 1–24 (MKHPPCSVVAAATAILAVVLAIGG) are cleaved as a signal peptide. A lipid anchor (N-palmitoyl cysteine) is attached at Cys-25. The S-diacylglycerol cysteine moiety is linked to residue Cys-25.

Belongs to the LppX/LprAFG lipoprotein family.

Its subcellular location is the cell membrane. This is Putative lipoprotein LprA (lprA) from Mycobacterium bovis (strain ATCC BAA-935 / AF2122/97).